Consider the following 374-residue polypeptide: N5-carboxyaminoimidazole ribonucleotide synthase (374 aa).

Residues R108, K148, 153–159, 183–186, E191, H214, and 266–267 contribute to the ATP site; these read GYDGKGQ, EKYL, and NE. The 185-residue stretch at 112-296 folds into the ATP-grasp domain; sequence KETLKSAGTK…QFDTHILAVT (185 aa).

It belongs to the PurK/PurT family. As to quaternary structure, homodimer.

It carries out the reaction 5-amino-1-(5-phospho-beta-D-ribosyl)imidazole + hydrogencarbonate + ATP = 5-carboxyamino-1-(5-phospho-D-ribosyl)imidazole + ADP + phosphate + 2 H(+). It participates in purine metabolism; IMP biosynthesis via de novo pathway; 5-amino-1-(5-phospho-D-ribosyl)imidazole-4-carboxylate from 5-amino-1-(5-phospho-D-ribosyl)imidazole (N5-CAIR route): step 1/2. Its function is as follows. Catalyzes the ATP-dependent conversion of 5-aminoimidazole ribonucleotide (AIR) and HCO(3)(-) to N5-carboxyaminoimidazole ribonucleotide (N5-CAIR). The sequence is that of N5-carboxyaminoimidazole ribonucleotide synthase from Staphylococcus aureus (strain Mu50 / ATCC 700699).